The sequence spans 206 residues: MRNTLDNLLNAAGIVISDKQKNLLIQYVDMLNKWNKAYNLTSVRDPQQMLVRHIMDSIVVEPHLHGQRFIDVGTGPGLPGIPLAIVRPESHFTLLDSLGKRVRFLRQVQHELQLENITPVQSRVEDFPAEPPFDGVISRAFASLQDMISWCNHLPARTTGRFYALKGVLPQDELSSLPQGVLLDQVVRLSVPDLEGERHLIVLKPN.

Residues G73, L78, V124–E125, and R139 each bind S-adenosyl-L-methionine.

Belongs to the methyltransferase superfamily. RNA methyltransferase RsmG family.

It is found in the cytoplasm. The catalysed reaction is guanosine(527) in 16S rRNA + S-adenosyl-L-methionine = N(7)-methylguanosine(527) in 16S rRNA + S-adenosyl-L-homocysteine. Its function is as follows. Specifically methylates the N7 position of guanine in position 527 of 16S rRNA. The protein is Ribosomal RNA small subunit methyltransferase G of Pectobacterium atrosepticum (strain SCRI 1043 / ATCC BAA-672) (Erwinia carotovora subsp. atroseptica).